A 688-amino-acid chain; its full sequence is Translation initiation factor IF-2 (688 aa).

The segment covering 50–62 has biased composition (basic and acidic residues); that stretch reads LLSGKEKSEKTKE. Residues 50–95 are disordered; sequence LLSGKEKSEKTKEEDDEIETTAKNPIKESINNKKSNKRDDKKEKVN. Residues 72 to 82 show a composition bias toward low complexity; that stretch reads KNPIKESINNK. Over residues 86–95 the composition is skewed to basic and acidic residues; it reads KRDDKKEKVN. The region spanning 187–354 is the tr-type G domain; it reads KRSPIITVMG…MILLSSEILE (168 aa). The interval 196–203 is G1; sequence GHVDHGKT. 196 to 203 provides a ligand contact to GTP; it reads GHVDHGKT. A G2 region spans residues 221–225; sequence GITQH. Residues 242 to 245 are G3; the sequence is DTPG. Residues 242-246 and 296-299 contribute to the GTP site; these read DTPGH and NKID. The interval 296-299 is G4; sequence NKID. Residues 332–334 form a G5 region; the sequence is SAH.

The protein belongs to the TRAFAC class translation factor GTPase superfamily. Classic translation factor GTPase family. IF-2 subfamily.

Its subcellular location is the cytoplasm. In terms of biological role, one of the essential components for the initiation of protein synthesis. Protects formylmethionyl-tRNA from spontaneous hydrolysis and promotes its binding to the 30S ribosomal subunits. Also involved in the hydrolysis of GTP during the formation of the 70S ribosomal complex. The protein is Translation initiation factor IF-2 of Clostridium botulinum (strain 657 / Type Ba4).